The sequence spans 364 residues: Guanine nucleotide-binding protein alpha-8 subunit (364 aa).

A lipid anchor (N-myristoyl glycine) is attached at Gly2. The S-palmitoyl cysteine moiety is linked to residue Cys5. The G-alpha domain maps to 38 to 364; the sequence is KILKLLILGP…QHTMQKVGIQ (327 aa). Positions 41–54 are G1 motif; that stretch reads KLLILGPGESGKST. GTP-binding positions include 46 to 53, 186 to 192, 211 to 215, 280 to 283, and Ala336; these read GPGESGKS, LKSRVPT, DVGGQ, and NKID. Mg(2+)-binding residues include Ser53 and Thr192. The G2 motif stretch occupies residues 184 to 192; the sequence is DILKSRVPT. The segment at 207–216 is G3 motif; that stretch reads FKIFDVGGQR. The interval 276 to 283 is G4 motif; the sequence is ILFLNKID. The tract at residues 334–339 is G5 motif; that stretch reads TCATDT.

Belongs to the G-alpha family. In terms of assembly, g proteins are composed of 3 units; alpha, beta and gamma. The alpha chain contains the guanine nucleotide binding site.

Guanine nucleotide-binding proteins (G proteins) are involved as modulators or transducers in various transmembrane signaling systems. This Caenorhabditis briggsae protein is Guanine nucleotide-binding protein alpha-8 subunit (gpa-8).